The primary structure comprises 280 residues: MIPTGAAFVAGVTGDPIAHSLSPVVMRHWIDAAGIDALYAPFPISAGNFDRVVRGLAGAGCRGLNVTLPHKEAALELARTASGPARAVGAANLLTFTPAGIHADNTDIAGFLYALAPANVEFRKARALIFGAGGAARAMLYALLTVGVTDVAICNRNITRAQGLSRDIAPDAGIIPWEARDDALQGRDLIINATSLGLAGRDELALDWQRVRPGSVAFDGIYIPVNTRFIVESRARGVTAIDGLDMLIGQARPSFEAFFGRPAPDLPDMRSRLLEHLGAR.

Shikimate is bound by residues 20–22 and Thr67; that span reads SLS. Residue Lys71 is the Proton acceptor of the active site. Shikimate contacts are provided by Asn92 and Asp107. NADP(+) contacts are provided by residues 131-135 and Gly220; that span reads GAGGA. Tyr222 is a binding site for shikimate. Residue Gly243 coordinates NADP(+).

Belongs to the shikimate dehydrogenase family. As to quaternary structure, homodimer.

The enzyme catalyses shikimate + NADP(+) = 3-dehydroshikimate + NADPH + H(+). The protein operates within metabolic intermediate biosynthesis; chorismate biosynthesis; chorismate from D-erythrose 4-phosphate and phosphoenolpyruvate: step 4/7. In terms of biological role, involved in the biosynthesis of the chorismate, which leads to the biosynthesis of aromatic amino acids. Catalyzes the reversible NADPH linked reduction of 3-dehydroshikimate (DHSA) to yield shikimate (SA). The sequence is that of Shikimate dehydrogenase (NADP(+)) from Maricaulis maris (strain MCS10) (Caulobacter maris).